Reading from the N-terminus, the 452-residue chain is Gamma-aminobutyric acid receptor subunit delta (452 aa).

Positions 1–24 (MDAPARLLAPLLLLCAQQLRGTRA) are cleaved as a signal peptide. At 25–251 (MNDIGDYVGS…HLRRNRGVYI (227 aa)) the chain is on the extracellular side. N-linked (GlcNAc...) asparagine glycans are attached at residues Asn-103 and Asn-106. Residues Cys-164 and Cys-178 are joined by a disulfide bond. The helical transmembrane segment at 252 to 271 (IQSYMPSVLLVAMSWVSFWI) threads the bilayer. Residues 272-275 (SQAA) are Cytoplasmic-facing. The chain crosses the membrane as a helical span at residues 276–298 (VPARVSLGITTVLTMTTLMVSAR). Residues 299–308 (SSLPRASAIK) are Extracellular-facing. The helical transmembrane segment at 309–331 (ALDVYFWICYVFVFAALVEYAFA) threads the bilayer. The Cytoplasmic segment spans residues 332 to 426 (HFNADYRKKQ…ARLRPIDADT (95 aa)). Ser-390 is modified (phosphoserine). A helical transmembrane segment spans residues 427 to 449 (IDIYARAVFPAAFAAVNVIYWAA). Over 450–452 (YAM) the chain is Extracellular.

This sequence belongs to the ligand-gated ion channel (TC 1.A.9) family. Gamma-aminobutyric acid receptor (TC 1.A.9.5) subfamily. GABRD sub-subfamily. In terms of assembly, heteropentamer, formed by a combination of alpha (GABRA1-6), beta (GABRB1-3), gamma (GABRG1-3), delta (GABRD), epsilon (GABRE), rho (GABRR1-3), pi (GABRP) and theta (GABRQ) chains, each subunit exhibiting distinct physiological and pharmacological properties.

The protein localises to the cell membrane. It carries out the reaction chloride(in) = chloride(out). Functionally, delta subunit of the heteropentameric ligand-gated chloride channel gated by gamma-aminobutyric acid (GABA), a major inhibitory neurotransmitter in the brain. GABA-gated chloride channels, also named GABA(A) receptors (GABAAR), consist of five subunits arranged around a central pore and contain GABA active binding site(s) located at the alpha and beta subunit interface(s). When activated by GABA, GABAARs selectively allow the flow of chloride anions across the cell membrane down their electrochemical gradient. GABAARs containing delta/GABRD subunits are predominantly located in extrasynaptic or perisynaptic positions on hippocampus and cerebellar granule cells, and contribute to the tonic GABAergic inhibition. GABAAR containing alpha-4-beta-3-delta subunits can simultaneously bind GABA and histamine where histamine binds at the interface of two neighboring beta subunits, which may be involved in the regulation of sleep and wakefulness. This chain is Gamma-aminobutyric acid receptor subunit delta, found in Homo sapiens (Human).